Consider the following 1147-residue polypeptide: Disease resistance protein RPP4 (1147 aa).

Residues 11–175 (RRYDVFPSFS…KIANDVSNKL (165 aa)) form the TIR domain. The active site involves Glu86. Residues 189 to 446 (EDHIKAIKSI…CFFNGFKVSN (258 aa)) enclose the NB-ARC domain. 18 LRR repeats span residues 548–573 (MRNLQYLEIGHWSEIGLWSEIGLWSK), 584–606 (PLKLKLLKWNYCPLKSLPSTFKA), 608–629 (YLVNLIMKYSKLEKLWEGTLPL), 630–653 (GSLKKMDLGCSNNLKEIPDLSLAI), 655–676 (LEELNLSKCESLVTLPSSIQNA), 698–721 (MCNLEYLSVDWSSMEGTQGLIYLP), 722–743 (RKLKRLWWDYCPVKRLPSNFKA), 744–766 (EYLVELRMENSDLEKLWDGTQPL), 767–790 (GSLKEMYLHGSKYLKEIPDLSLAI), 792–813 (LERLYLFGCESLVTLPSSIQNA), 814–836 (TKLINLDMRDCKKLESFPTDLNL), 837–860 (ESLEYLNLTGCPNLRNFPAIKMGC), 926–950 (LGSLKRMDLSESENLTEIPDLSKAT), 952–973 (LKRLYLNGCKSLVTLPSTIGNL), 974–996 (HRLVRLEMKECTGLELLPTDVNL), 997–1017 (SSLIILDLSGCSSLRTFPLIS), 1018–1042 (TRIECLYLENTAIEEVPCCIEDLTR), and 1044–1064 (SVLLMYCCQRLKNISPNIFRL).

Interacts with RSH1.

It catalyses the reaction NAD(+) + H2O = ADP-D-ribose + nicotinamide + H(+). Its function is as follows. TIR-NB-LRR receptor-like protein that confers resistance to the pathogen Hyaloperonospora arabidopsis isolates Emoy2 and Emwa1 (downy mildew disease). Plays a role in the regulation of temperature response during plant growth and survival. The protein is Disease resistance protein RPP4 of Arabidopsis thaliana (Mouse-ear cress).